The primary structure comprises 450 residues: Bifunctional protein GlmU (450 aa).

The pyrophosphorylase stretch occupies residues 1-229; it reads MRRHAIILAA…VEEIMGVNDR (229 aa). UDP-N-acetyl-alpha-D-glucosamine contacts are provided by residues 8-11, K22, Q72, and 77-78; these read LAAG and GT. D102 contributes to the Mg(2+) binding site. Residues G139, E154, and N227 each coordinate UDP-N-acetyl-alpha-D-glucosamine. N227 lines the Mg(2+) pocket. Positions 230-250 are linker; sequence VMLSQAENAMQRRTNHYHMLN. Residues 251–450 are N-acetyltransferase; sequence GVTIIDPDST…RQTTKEGYRK (200 aa). Residues R332 and K350 each coordinate UDP-N-acetyl-alpha-D-glucosamine. H362 (proton acceptor) is an active-site residue. The UDP-N-acetyl-alpha-D-glucosamine site is built by Y365 and N376. Residues 385–386, A422, and R439 contribute to the acetyl-CoA site; that span reads NY.

In the N-terminal section; belongs to the N-acetylglucosamine-1-phosphate uridyltransferase family. This sequence in the C-terminal section; belongs to the transferase hexapeptide repeat family. As to quaternary structure, homotrimer. It depends on Mg(2+) as a cofactor.

The protein localises to the cytoplasm. The catalysed reaction is alpha-D-glucosamine 1-phosphate + acetyl-CoA = N-acetyl-alpha-D-glucosamine 1-phosphate + CoA + H(+). It catalyses the reaction N-acetyl-alpha-D-glucosamine 1-phosphate + UTP + H(+) = UDP-N-acetyl-alpha-D-glucosamine + diphosphate. Its pathway is nucleotide-sugar biosynthesis; UDP-N-acetyl-alpha-D-glucosamine biosynthesis; N-acetyl-alpha-D-glucosamine 1-phosphate from alpha-D-glucosamine 6-phosphate (route II): step 2/2. It functions in the pathway nucleotide-sugar biosynthesis; UDP-N-acetyl-alpha-D-glucosamine biosynthesis; UDP-N-acetyl-alpha-D-glucosamine from N-acetyl-alpha-D-glucosamine 1-phosphate: step 1/1. The protein operates within bacterial outer membrane biogenesis; LPS lipid A biosynthesis. Catalyzes the last two sequential reactions in the de novo biosynthetic pathway for UDP-N-acetylglucosamine (UDP-GlcNAc). The C-terminal domain catalyzes the transfer of acetyl group from acetyl coenzyme A to glucosamine-1-phosphate (GlcN-1-P) to produce N-acetylglucosamine-1-phosphate (GlcNAc-1-P), which is converted into UDP-GlcNAc by the transfer of uridine 5-monophosphate (from uridine 5-triphosphate), a reaction catalyzed by the N-terminal domain. The sequence is that of Bifunctional protein GlmU from Staphylococcus aureus (strain MRSA252).